A 355-amino-acid chain; its full sequence is Putative beta-lactamase HcpE (355 aa).

The signal sequence occupies residues 1 to 22 (MNIKILKILVGGLFFLSLNAHL). TPR repeat units lie at residues 27–60 (DNSF…GVSE), 63–96 (TQLG…DDRE), 98–131 (CFGL…LKHP), 132–166 (ESCY…DMAK), 202–240 (GQAC…NNSG), 245–275 (LGSM…MGSA), 276–311 (VSCS…MGDE), and 312–344 (VGCF…GMKQ). Intrachain disulfides connect C54-C62, C90-C98, C126-C134, C160-C168, C197-C205, C234-C242, C270-C278, C306-C314, and C338-C346.

The protein belongs to the hcp beta-lactamase family.

It localises to the secreted. The catalysed reaction is a beta-lactam + H2O = a substituted beta-amino acid. May hydrolyze 6-aminopenicillinic acid and 7-aminocephalosporanic acid (ACA) derivatives. The protein is Putative beta-lactamase HcpE (hcpE) of Helicobacter pylori (strain J99 / ATCC 700824) (Campylobacter pylori J99).